The following is a 583-amino-acid chain: Bifunctional dihydrofolate reductase-thymidylate synthase (583 aa).

One can recognise a DHFR domain in the interval 9–229; that stretch reads DIYAICACCK…TTLDFVIYSK (221 aa). 36-42 lines the NADP(+) pocket; sequence GLGNEGG. Residue D51 participates in substrate binding. Residues 104-106 and 125-128 contribute to the NADP(+) site; these read KAS and LSRT. Substrate is bound by residues I165, Y171, and T186. NADP(+) is bound at residue 166 to 173; that stretch reads GGASVYKE. Residues 298-583 are thymidylate synthase; it reads HPEYQYLNII…HDKISMDMAA (286 aa). R320 provides a ligand contact to dUMP. Residue C465 is part of the active site. DUMP-binding positions include H466, 484–488, N496, and 526–528; these read QRSCD and HVY.

In the N-terminal section; belongs to the dihydrofolate reductase family. This sequence in the C-terminal section; belongs to the thymidylate synthase family. As to quaternary structure, homodimer.

The catalysed reaction is (6S)-5,6,7,8-tetrahydrofolate + NADP(+) = 7,8-dihydrofolate + NADPH + H(+). It carries out the reaction dUMP + (6R)-5,10-methylene-5,6,7,8-tetrahydrofolate = 7,8-dihydrofolate + dTMP. It functions in the pathway cofactor biosynthesis; tetrahydrofolate biosynthesis; 5,6,7,8-tetrahydrofolate from 7,8-dihydrofolate: step 1/1. Bifunctional enzyme. Involved in de novo dTMP biosynthesis. Key enzyme in folate metabolism. Catalyzes an essential reaction for de novo glycine and purine synthesis, DNA precursor synthesis, and for the conversion of dUMP to dTMP. This chain is Bifunctional dihydrofolate reductase-thymidylate synthase, found in Plasmodium chabaudi.